The sequence spans 763 residues: Protein CHROMATIN REMODELING 19 (763 aa).

Disordered stretches follow at residues 1-43 (MKRD…TPSI) and 114-149 (EDEE…RGED). The segment covering 23 to 34 (VLKRPRTPKKTR) has biased composition (basic residues). Residues 114–135 (EDEEASDDDDDEAESSASEDEF) show a composition bias toward acidic residues. The Helicase ATP-binding domain maps to 226 to 404 (LLYKKGIEGA…WSLLEFMLPD (179 aa)). 239–246 (DEMGLGKT) contributes to the ATP binding site. The DEAH box motif lies at 353–356 (DEAH). The stretch at 462–482 (RKQEDAYKEAIEEYRAASQAR) forms a coiled coil. A Nuclear localization signal motif is present at residues 520 to 527 (IRRIYSDE). Residues 592-742 (TLAELLPSMK…AAVLESGVHV (151 aa)) enclose the Helicase C-terminal domain.

This sequence belongs to the SNF2/RAD54 helicase family. Interacts with SUVR2 and itself.

The protein localises to the nucleus. Functionally, DNA helicase that possesses intrinsic ATP-dependent nucleosome-remodeling activity and is both required for DNA repair and heterochromatin organization. Promotes DNA end resection of double-strand breaks (DSBs) following DNA damage: probably acts by weakening histone DNA interactions in nucleosomes flanking DSBs. Probable chromatin remodeling factor. Probable helicase-like transcription factor involved in transcriptional gene silencing. Associates with SUVR2 and contributes to transcriptional gene silencing at RNA-directed DNA methylation (RdDM) target loci but also at RdDM-independent target loci. May be involved in nucleosome positioning to form ordered nucleosome arrays on chromatin. This Arabidopsis thaliana (Mouse-ear cress) protein is Protein CHROMATIN REMODELING 19.